Reading from the N-terminus, the 1098-residue chain is Probable arabinosyltransferase B (1098 aa).

Helical transmembrane passes span 28 to 50 (WVAT…LPVV), 217 to 239 (LKLL…LWRL), 271 to 293 (ASWR…WHVI), 402 to 419 (LRPE…YVLI), 434 to 456 (AVVT…AALV), 472 to 494 (LVGT…TVVF), 541 to 558 (FGFL…FIML), 570 to 587 (PAWR…FLMF), 597 to 619 (GLFA…PSVL), 626 to 648 (MAFL…GWWY), 663 to 685 (IDGI…YAAW), and 698 to 720 (LIRA…VFVA).

The protein belongs to the emb family.

It is found in the cell membrane. In terms of biological role, arabinosyl transferase responsible for the polymerization of arabinose into the arabinan of arabinogalactan. The polypeptide is Probable arabinosyltransferase B (embB) (Mycobacterium bovis (strain ATCC BAA-935 / AF2122/97)).